A 204-amino-acid chain; its full sequence is Holliday junction branch migration complex subunit RuvA (204 aa).

A domain I region spans residues 1–64; the sequence is MIGKLKGTID…EDQLKLFGFM (64 aa). Residues 65-143 are domain II; sequence TALEREWFNL…AFAGEAINIG (79 aa). The interval 144 to 151 is flexible linker; it reads LKQELGEG. The domain III stretch occupies residues 152–204; sequence VAAAPVADAVSALTNLGYSRDQAANAIAAAMKTAGEGADSAKLIRLGLKELAR.

Belongs to the RuvA family. As to quaternary structure, homotetramer. Forms an RuvA(8)-RuvB(12)-Holliday junction (HJ) complex. HJ DNA is sandwiched between 2 RuvA tetramers; dsDNA enters through RuvA and exits via RuvB. An RuvB hexamer assembles on each DNA strand where it exits the tetramer. Each RuvB hexamer is contacted by two RuvA subunits (via domain III) on 2 adjacent RuvB subunits; this complex drives branch migration. In the full resolvosome a probable DNA-RuvA(4)-RuvB(12)-RuvC(2) complex forms which resolves the HJ.

It localises to the cytoplasm. Functionally, the RuvA-RuvB-RuvC complex processes Holliday junction (HJ) DNA during genetic recombination and DNA repair, while the RuvA-RuvB complex plays an important role in the rescue of blocked DNA replication forks via replication fork reversal (RFR). RuvA specifically binds to HJ cruciform DNA, conferring on it an open structure. The RuvB hexamer acts as an ATP-dependent pump, pulling dsDNA into and through the RuvAB complex. HJ branch migration allows RuvC to scan DNA until it finds its consensus sequence, where it cleaves and resolves the cruciform DNA. In Rhizobium johnstonii (strain DSM 114642 / LMG 32736 / 3841) (Rhizobium leguminosarum bv. viciae), this protein is Holliday junction branch migration complex subunit RuvA.